The sequence spans 411 residues: Gamma-glutamyl phosphate reductase (411 aa).

Belongs to the gamma-glutamyl phosphate reductase family.

It localises to the cytoplasm. The catalysed reaction is L-glutamate 5-semialdehyde + phosphate + NADP(+) = L-glutamyl 5-phosphate + NADPH + H(+). It participates in amino-acid biosynthesis; L-proline biosynthesis; L-glutamate 5-semialdehyde from L-glutamate: step 2/2. Functionally, catalyzes the NADPH-dependent reduction of L-glutamate 5-phosphate into L-glutamate 5-semialdehyde and phosphate. The product spontaneously undergoes cyclization to form 1-pyrroline-5-carboxylate. The protein is Gamma-glutamyl phosphate reductase of Wolinella succinogenes (strain ATCC 29543 / DSM 1740 / CCUG 13145 / JCM 31913 / LMG 7466 / NCTC 11488 / FDC 602W) (Vibrio succinogenes).